A 369-amino-acid chain; its full sequence is MDYDLLIKNGQTVNGMPVEIAIKEKKIAAVAATISGSAKETIHLEPGTYVSAGWIDDHVHCFEKMALYYDYPDEIGVKKGVTTVIDAGTTGAENIHEFYDLAQQAKTNVFGLVNISKWGIVAQDELADLSKVQASLVKKAIQELPDFVVGIKARMSRTVIGDNGITPLELAKQIQQENQEIPLMVHIGSAPPHLDEILALMEKGDVLTHCFNGKENGILDQATDKIKDFAWQAYNKGVVFDIGHGTDSFNFHVAETALREGMKAASISTDIYIRNRENGPVYDLATTMEKLRVVGYDWPEIIEKVTKAPAENFHLTQKGTLEIGKDADLTIFTIQAEEKTLTDSNGLTRVAKEQIRPIKTIIGGQIYDN.

6 residues coordinate Zn(2+): His-58, His-60, Lys-152, His-186, His-209, and Asp-270. Position 152 is an N6-carboxylysine (Lys-152).

This sequence belongs to the metallo-dependent hydrolases superfamily. Atu3266/EF_0837 deacetylase family. It depends on Zn(2+) as a cofactor.

Functionally, esterase that can catalyze the deacetylation of acetyl-(R)-mandelate, but with very low efficiency (in vitro). The sequence is that of Deacetylase EF_0837 from Enterococcus faecalis (strain ATCC 700802 / V583).